The chain runs to 143 residues: Transcriptional regulator MraZ (143 aa).

SpoVT-AbrB domains follow at residues 6 to 49 and 78 to 121; these read TYNH…NEAE and SDET…DLKV.

This sequence belongs to the MraZ family. In terms of assembly, forms oligomers.

The protein localises to the cytoplasm. The protein resides in the nucleoid. This chain is Transcriptional regulator MraZ, found in Spiroplasma kunkelii.